Consider the following 343-residue polypeptide: Transmembrane protein 120A (343 aa).

The Cytoplasmic segment spans residues 1-132 (MHPPPPGPLG…KQAKFAYKDE (132 aa)). A CoA-binding site is contributed by Lys130. The chain crosses the membrane as a helical span at residues 133–152 (YEKFKLYLTIILILISFTCR). Residues 153-158 (FLLNSR) are Extracellular-facing. A helical membrane pass occupies residues 159–177 (VTDAAFNFLLVWYYCTLTI). The Cytoplasmic portion of the chain corresponds to 178 to 190 (RESILINNGSRIK). Positions 187 and 188 each coordinate CoA. A helical transmembrane segment spans residues 191–209 (GWWVFHHYVSTFLSGVMLT). Residues 210–218 (WPDGLMYQK) lie on the Extracellular side of the membrane. Residues 219–240 (FRNQFLSFSMYQSFVQFLQYYY) form a helical membrane-spanning segment. Residues Gln237, Tyr240, Gln241, and His283 each coordinate CoA. Over 241-270 (QSGCLYRLRALGERHTMDLTVEGFQSWMWR) the chain is Cytoplasmic. A helical transmembrane segment spans residues 271 to 294 (GLTFLLPFLFFGHFWQLFNALTLF). Residues 295–304 (NLARDPECKE) are Extracellular-facing. A helical transmembrane segment spans residues 305-330 (WQVLMCGFPFLLLFLGNFFTTLRVVH). Topologically, residues 331–343 (QKFHNQLHGSKKE) are cytoplasmic. Residue Lys332 coordinates CoA.

Belongs to the TMEM120 family. Homodimer. Forms heterooligomer with TMEM120B. Interacts with PKD2; TMEM120A inhibits PKD2 channel activity through the physical association of PKD2 with TMEM120A.

The protein resides in the cell membrane. It is found in the nucleus inner membrane. It localises to the endoplasmic reticulum. Multifunctional protein involved in mechanosensation, and plays an essential role in lipid metabolism and adipocyte differentiation. May function as an ion channel involved in sensing mechanical stimuli. Mediates the mechanosensitivity of the PKD2-TMEM120A channel complex through direct physical interaction. TMEM120A seems to affect mechanosensation by inhibiting PIEZO2 channels, possibly by altering cellular lipid content. TMEM120A is structurally similar to a lipid-modifying enzyme, ELOVL7, and contains a bound coenzyme A molecule, which suggests it might function as an enzyme in lipid metabolism. Additionnaly, implicated in innate immune response against Zika virus. Acts as a key activator of the antiviral signaling involving STING1. The chain is Transmembrane protein 120A from Bos taurus (Bovine).